The sequence spans 448 residues: Ribosomal protein uS12 methylthiotransferase RimO (448 aa).

The 111-residue stretch at proline 16–proline 126 folds into the MTTase N-terminal domain. Positions 25, 61, 90, 157, 161, and 164 each coordinate [4Fe-4S] cluster. Positions leucine 143–lysine 380 constitute a Radical SAM core domain. The TRAM domain occupies arginine 383–valine 448.

This sequence belongs to the methylthiotransferase family. RimO subfamily. It depends on [4Fe-4S] cluster as a cofactor.

The protein resides in the cytoplasm. The catalysed reaction is L-aspartate(89)-[ribosomal protein uS12]-hydrogen + (sulfur carrier)-SH + AH2 + 2 S-adenosyl-L-methionine = 3-methylsulfanyl-L-aspartate(89)-[ribosomal protein uS12]-hydrogen + (sulfur carrier)-H + 5'-deoxyadenosine + L-methionine + A + S-adenosyl-L-homocysteine + 2 H(+). In terms of biological role, catalyzes the methylthiolation of an aspartic acid residue of ribosomal protein uS12. This chain is Ribosomal protein uS12 methylthiotransferase RimO, found in Methylorubrum populi (strain ATCC BAA-705 / NCIMB 13946 / BJ001) (Methylobacterium populi).